Consider the following 279-residue polypeptide: MAFQGTSRTLTQQSSAATSDDLQKILFSPEAIKKMATECDLGRHHWMRADNAISVRPLVPEVTHGRIASFFKSGYDVGELCSKGYMSVPQVLCAVTRTVSTDAEGSLRIYLADLGDKELSPIDGQCVSLHNHDLPALVSFQPTYDCPMETVGNRKRCFAVVIERHGYIGYTGTTASVCSNWQARFSSKNNNYTHIAAGKTLVLPFNRLAEQTKPSAVARLLKSQLNNIESSQYLLTNAKINQNARSESEELNVESPPAAIGSSSASRSEAFRPQVVNGL.

The tract at residues 246 to 279 (SESEELNVESPPAAIGSSSASRSEAFRPQVVNGL) is disordered. Positions 254–268 (ESPPAAIGSSSASRS) are enriched in low complexity.

Belongs to the cucumovirus movement protein family.

It is found in the host cell junction. The protein resides in the host plasmodesma. In terms of biological role, transports viral genome to neighboring plant cells directly through plasmosdesmata, without any budding. The movement protein allows efficient cell to cell propagation, by bypassing the host cell wall barrier. Acts by forming a tubular structure at the host plasmodesmata, enlarging it enough to allow free passage of virion capsids. This chain is Movement protein, found in Cucumis sativus (Cucumber).